The sequence spans 211 residues: Large ribosomal subunit protein uL4 (211 aa).

A disordered region spans residues 41 to 87 (QAHARQGTASTLTRSEVRGGGRKPYKQKGTGRARQGSIRTPLRPGGG). A compositionally biased stretch (basic residues) spans 60 to 71 (GGRKPYKQKGTG).

This sequence belongs to the universal ribosomal protein uL4 family. As to quaternary structure, part of the 50S ribosomal subunit.

In terms of biological role, one of the primary rRNA binding proteins, this protein initially binds near the 5'-end of the 23S rRNA. It is important during the early stages of 50S assembly. It makes multiple contacts with different domains of the 23S rRNA in the assembled 50S subunit and ribosome. Functionally, forms part of the polypeptide exit tunnel. This is Large ribosomal subunit protein uL4 from Parasynechococcus marenigrum (strain WH8102).